Reading from the N-terminus, the 301-residue chain is POU domain, class 6, transcription factor 1 (301 aa).

2 consecutive repeat copies span residues asparagine 11–isoleucine 17 and asparagine 50–isoleucine 56. The interval asparagine 11–isoleucine 56 is 2 X 7 AA repeats of N-A-Q-G-Q-V-I. A disordered region spans residues glutamine 66–glutamine 88. Residues glutamate 139–glutamate 213 form the POU-specific domain. Residues lysine 234–serine 293 constitute a DNA-binding region (homeobox).

It belongs to the POU transcription factor family. Class-6 subfamily. As to expression, in the embryo, widely expressed, with highest levels in the developing brain and spinal cord. In the adult, mostly found in the brain, where it is diffusely expressed with the exception of an enrichment in layer IV of the neocortex. Also found in kidney, lung, heart, adrenal, skin, and placenta. Low levels in spleen, muscle, liver, anterior pituitary, testis and ovary.

The protein localises to the nucleus. Transcription factor that binds preferentially to a variant of the octamer motif (5'-ATGATAAT-3'). This is POU domain, class 6, transcription factor 1 (Pou6f1) from Rattus norvegicus (Rat).